The sequence spans 459 residues: Antizyme inhibitor 2 (459 aa).

Residues 117–140 (QVAQIKYAAKHGVRLLSFDNEVEL) are necessary for polyamine uptake stimulation.

It belongs to the Orn/Lys/Arg decarboxylase class-II family. ODC antizyme inhibitor subfamily. Monomer. Interacts with OAZ1, OAZ2 and OAZ3; this interaction disrupts the interaction between the antizyme and ODC1. Does not form a heterodimer with ODC1. Ubiquitinated, leading to its proteasomal degradation; a process that is reduced in presence of antizymes. May also be degraded through the lysosomal degradative pathway in a proteasomal-independent manner. In terms of tissue distribution, expressed in the medulla and chromaffin cells of the adrenal gland. Expressed in the Langerhans islets of the pancreas. Expressed in the inner part of the seminiferous tubules and in spermatozoa located in the lumen of the epididymis of the testis. Expressed in the cortex, hippocampus and cerebellum of the brain. Expressed in normal and neoplastic mast cells (MC) (at protein level). Expressed in testis, pancreas and brain. Expressed throughout the differentiation process from spermatids to spermatozoa in the inner part of the seminiferous tubules. Expressed in the kidney: expressed in the superficial (Cs) and the deep layer (Cd) of the cortex region and in the outer stripe (OS), inner stripe (IS) and the inner medulla papilla (IM) of the medulla region.

Its subcellular location is the nucleus. The protein localises to the cytoplasm. It localises to the perinuclear region. It is found in the membrane. The protein resides in the cytoplasmic vesicle. Its subcellular location is the endoplasmic reticulum-Golgi intermediate compartment. The protein localises to the golgi apparatus. It localises to the cis-Golgi network. It is found in the trans-Golgi network. The protein resides in the cytoplasmic granule. Its subcellular location is the cell projection. The protein localises to the axon. It localises to the dendrite. It is found in the perikaryon. Antizyme inhibitor (AZI) protein that positively regulates ornithine decarboxylase (ODC) activity and polyamine uptake. AZI is an enzymatically inactive ODC homolog that counteracts the negative effect of ODC antizymes (AZs) OAZ1, OAZ2 and OAZ3 on ODC activity by competing with ODC for antizyme-binding. Inhibits antizyme-dependent ODC degradation and releases ODC monomers from their inactive complex with antizymes, leading to formation of the catalytically active ODC homodimer and restoring polyamine production. Participates in the morphological integrity of the trans-Golgi network (TGN) and functions as a regulator of intracellular secretory vesicle trafficking. In Mus musculus (Mouse), this protein is Antizyme inhibitor 2 (Azin2).